A 307-amino-acid polypeptide reads, in one-letter code: Elongation factor Ts (307 aa).

The tract at residues 79–82 (TDFV) is involved in Mg(2+) ion dislocation from EF-Tu.

Belongs to the EF-Ts family.

Its subcellular location is the cytoplasm. In terms of biological role, associates with the EF-Tu.GDP complex and induces the exchange of GDP to GTP. It remains bound to the aminoacyl-tRNA.EF-Tu.GTP complex up to the GTP hydrolysis stage on the ribosome. This chain is Elongation factor Ts (tsf), found in Bartonella quintana (strain Toulouse) (Rochalimaea quintana).